The sequence spans 145 residues: D-aminoacyl-tRNA deacylase (145 aa).

The short motif at 137–138 (GP) is the Gly-cisPro motif, important for rejection of L-amino acids element.

Belongs to the DTD family. In terms of assembly, homodimer.

The protein resides in the cytoplasm. The catalysed reaction is glycyl-tRNA(Ala) + H2O = tRNA(Ala) + glycine + H(+). The enzyme catalyses a D-aminoacyl-tRNA + H2O = a tRNA + a D-alpha-amino acid + H(+). An aminoacyl-tRNA editing enzyme that deacylates mischarged D-aminoacyl-tRNAs. Also deacylates mischarged glycyl-tRNA(Ala), protecting cells against glycine mischarging by AlaRS. Acts via tRNA-based rather than protein-based catalysis; rejects L-amino acids rather than detecting D-amino acids in the active site. By recycling D-aminoacyl-tRNA to D-amino acids and free tRNA molecules, this enzyme counteracts the toxicity associated with the formation of D-aminoacyl-tRNA entities in vivo and helps enforce protein L-homochirality. The protein is D-aminoacyl-tRNA deacylase of Limosilactobacillus fermentum (strain NBRC 3956 / LMG 18251) (Lactobacillus fermentum).